Reading from the N-terminus, the 57-residue chain is Toxin GhoT (57 aa).

2 helical membrane passes run 7–27 (ILIF…FISH) and 37–57 (AFLV…FSLF).

This sequence belongs to the GhoT/OrtT toxin family.

The protein localises to the cell inner membrane. Toxic component of a type V toxin-antitoxin (TA) system. Causes membrane damage when induced by MqsR, slowing cell growth and leading to the formation of dormant persister cells; involved with GhoS, its antitoxin, in reducing cell growth during antibacterial stress. Its toxic effects are neutralized by GhoS, which digests ghoT transcripts in a sequence-specific manner. This chain is Toxin GhoT, found in Escherichia coli O157:H7.